A 70-amino-acid chain; its full sequence is uncharacterized protein (70 aa).

A signal peptide spans 1–16 (MKLLLVLITLIIAALA).

This is an uncharacterized protein from Orgyia pseudotsugata (Douglas-fir tussock moth).